The following is a 1451-amino-acid chain: MGQAASMCRFRGCRYKNKNKSSKQQQQQQQQQQQQQQQHQQQQQQTPSHSPQIQHHSEIIPATTGLHLRSIEEPATTPLQFQPTGRMNTEQGGTGYGGYGSSEHSLLIATRHAGVPLPLAQHQPLPAHYQPLNHSGAAPPSSSNGSSSSGGGVQTSATPQQQQQYQVQQPYQYQYQHHYHHQANSPQHHRPYDPEHARMEAWLDENQEFVQDYFIRKATRQTVDAWLVSHATSAGNDVVSSTSPTHANGQTSSSRGGSGATTPVRKISAHEFERGGLLKPIVNTIDGTPTFLSIGPPMDNGSVGGSCSNLQNVGGVVAGQYQYNHQQHHHNHAHLHHSQHSHYQAGGAVGSSSLGSTGGASGAGGAPSLGGSGGAGNGHQYPYYHCHQRPQRLSRNELKQLDEKELIFELVKDICNELEVRTLCHKILQNVSILLNADRGSLFLVQGRCNGPDGLKKCLVSKLFDVCPRSTVEEMEQQDEVRVAWGTGIAGHVAESGEPVNIPDAYQDERFNCEIDSLTGYRTKALLCMPIKDSSGDVIGVAQVINKMNGECFSEIDEKVFSSYLQFCGIGLRNAQLYEKSQLEIKRNQVLLDLARMIFEEQSTIEHMVFRILTHMQSLIQCQRVQILLVHEADKGSFSRVFDFEANDLSEEEATSRTSPYESRFPINIGITGHVATTGETVNVPNAYEDDRFDASVDENSCFKHRSILCMAIKNSLGQIIGVIQLINKFNELDFTKNDENFVEAFAIFCGMGIHNTHMYEKAIVAMAKQSVTLEVLSYHASATMDEAHRLRRLRVPSAVHFRLHDFKFDDIHFEDDDTLKACLRMFLDLDFVERFHIDYEVLCRWLLSVKKNYRNVTYHNWRHAFNVAQMMFAILTTTQWWKIFGEIECLALIIGCLCHDLDHRGTNNSFQIKASSPLAQLYSTSTMEHHHFDQCLMILNSPGNQILANLSSDDYCRVIRVLEDAILSTDLAVYFKKRGPFLESVSQPTSYWVAEEPRALLRAMSMTVCDLSAITKPWEIEKRVADLVSSEFFEQGDMEKQELNITPIDIMNREKEDELPMMQVNFIDSICLPIYEAFATLSDKLEPLVEGVRDNRGHWIDLADVVKTKTSQDQEPEEEQQQQNVISNGDCKAMSDDDVAASEAEVAVDSPSEKASVNGSNVANNSSNTNKKIAVASHPTSTQPSDDDNDVDADADDVDEQAAEENGHDAEVDEASCRSNSTCSSSTASSCLSTPPPTGEDDSTPVSPLKTLQAKLVAANLNALQRQTSNQAQTQKQRCKSCDHSRSGLQVRKTSSLRGAQELDLDSKTRNGTHAALCKSTPVINNHSHHHNHSHSHNHNHHHHHHHHSHHNHSQHGIGIGSASIGGSGLISLTTPLLAMDSDRIPKIVGKIGNLDGLPFANGIGGPQNGHGLPFGSYQHHHHHQHHHHLLARRHSETNSNGATAMAVEK.

Disordered stretches follow at residues 1–54 (MGQA…PQIQ), 75–100 (ATTPLQFQPTGRMNTEQGGTGYGGYG), 125–169 (LPAH…QVQQ), 235–262 (GNDVVSSTSPTHANGQTSSSRGGSGATT), and 327–374 (QHHH…GSGG). Over residues 11-21 (RGCRYKNKNKS) the composition is skewed to basic residues. Residues 24–45 (QQQQQQQQQQQQQQQHQQQQQQ) show a composition bias toward low complexity. Positions 77–91 (TPLQFQPTGRMNTEQ) are enriched in polar residues. Composition is skewed to low complexity over residues 135–147 (SGAAPPSSSNGSS) and 160–169 (QQQQQYQVQQ). The span at 235–248 (GNDVVSSTSPTHAN) shows a compositional bias: polar residues. Over residues 327 to 340 (QHHHNHAHLHHSQH) the composition is skewed to basic residues. The segment covering 341–355 (SHYQAGGAVGSSSLG) has biased composition (low complexity). Over residues 356-374 (STGGASGAGGAPSLGGSGG) the composition is skewed to gly residues. GAF domains lie at 419-572 (EVRT…GIGL) and 604-754 (TIEH…GMGI). Positions 783–1107 (ATMDEAHRLR…GHWIDLADVV (325 aa)) constitute a PDEase domain. The Proton donor role is filled by histidine 860. Histidine 864, histidine 900, aspartate 901, and aspartate 1011 together coordinate a divalent metal cation. 4 disordered regions span residues 1109-1171 (TKTS…SNTN), 1200-1248 (DEQA…TPVS), 1268-1305 (QTSNQAQTQKQRCKSCDHSRSGLQVRKTSSLRGAQELD), and 1325-1364 (INNHSHHHNHSHSHNHNHHHHHHHHSHHNHSQHGIGIGSA). Composition is skewed to low complexity over residues 1142-1171 (ASEAEVAVDSPSEKASVNGSNVANNSSNTN) and 1218-1234 (CRSNSTCSSSTASSCLS). Over residues 1268-1277 (QTSNQAQTQK) the composition is skewed to polar residues. Residues 1328-1355 (HSHHHNHSHSHNHNHHHHHHHHSHHNHS) show a composition bias toward basic residues.

The protein belongs to the cyclic nucleotide phosphodiesterase family. It depends on a divalent metal cation as a cofactor. In terms of tissue distribution, in adults, it is enriched in Malpighian tubules.

It carries out the reaction 3',5'-cyclic GMP + H2O = GMP + H(+). The enzyme catalyses 3',5'-cyclic AMP + H2O = AMP + H(+). Its function is as follows. Plays a role in signal transduction by regulating the intracellular concentration of cyclic nucleotides cAMP and cGMP. Dual-specificity phosphodiesterase that catalyzes the hydrolysis of both cAMP and cGMP to 5'-AMP and 5'-GMP, respectively. This Drosophila melanogaster (Fruit fly) protein is Dual 3',5'-cyclic-AMP and -GMP phosphodiesterase 11 (Pde11).